Reading from the N-terminus, the 98-residue chain is Large ribosomal subunit protein uL23 (98 aa).

This sequence belongs to the universal ribosomal protein uL23 family. In terms of assembly, part of the 50S ribosomal subunit. Contacts protein L29, and trigger factor when it is bound to the ribosome.

One of the early assembly proteins it binds 23S rRNA. One of the proteins that surrounds the polypeptide exit tunnel on the outside of the ribosome. Forms the main docking site for trigger factor binding to the ribosome. This is Large ribosomal subunit protein uL23 from Rickettsia peacockii (strain Rustic).